The following is a 138-amino-acid chain: MTVYTGIDIVEIARIKRAVERWGDRFVQRIYSPAEIALCAGRINSLAARWAAKEAVAKLLGVGMRGPGSSAHSVAFRDIETLTDDDGRPTVTLSGAARARARELHIESICISLSHDHGLAIAVAVASTSPAARRRMPW.

Mg(2+) is bound by residues D8 and E54.

This sequence belongs to the P-Pant transferase superfamily. AcpS family. Requires Mg(2+) as cofactor.

It is found in the cytoplasm. It carries out the reaction apo-[ACP] + CoA = holo-[ACP] + adenosine 3',5'-bisphosphate + H(+). Its function is as follows. Transfers the 4'-phosphopantetheine moiety from coenzyme A to a Ser of acyl-carrier-protein. This Roseiflexus sp. (strain RS-1) protein is Holo-[acyl-carrier-protein] synthase.